A 131-amino-acid chain; its full sequence is Ribosome-binding factor A (131 aa).

This sequence belongs to the RbfA family. As to quaternary structure, monomer. Binds 30S ribosomal subunits, but not 50S ribosomal subunits or 70S ribosomes.

The protein resides in the cytoplasm. One of several proteins that assist in the late maturation steps of the functional core of the 30S ribosomal subunit. Associates with free 30S ribosomal subunits (but not with 30S subunits that are part of 70S ribosomes or polysomes). Required for efficient processing of 16S rRNA. May interact with the 5'-terminal helix region of 16S rRNA. The protein is Ribosome-binding factor A of Thermotoga sp. (strain RQ2).